Reading from the N-terminus, the 220-residue chain is Uracil-DNA glycosylase 1 (220 aa).

Aspartate 65 functions as the Proton acceptor in the catalytic mechanism.

This sequence belongs to the uracil-DNA glycosylase (UDG) superfamily. UNG family.

Its subcellular location is the cytoplasm. It catalyses the reaction Hydrolyzes single-stranded DNA or mismatched double-stranded DNA and polynucleotides, releasing free uracil.. Functionally, excises uracil residues from the DNA which can arise as a result of misincorporation of dUMP residues by DNA polymerase or due to deamination of cytosine. In Bacteroides fragilis (strain ATCC 25285 / DSM 2151 / CCUG 4856 / JCM 11019 / LMG 10263 / NCTC 9343 / Onslow / VPI 2553 / EN-2), this protein is Uracil-DNA glycosylase 1.